The primary structure comprises 75 residues: Microcin H47 (75 aa).

Positions 1 to 15 (MREITESQLRYISGA) are excised as a propeptide. Residues 30-50 (AIVGALAGIPGGPLGVVVGAV) traverse the membrane as a helical segment.

The protein localises to the secreted. It is found in the host cell membrane. Its function is as follows. Bactericidal antibiotic. Active on bacteria phylogenetically related to the producing strain. The sequence is that of Microcin H47 (mchB) from Escherichia coli O6:H1 (strain CFT073 / ATCC 700928 / UPEC).